The primary structure comprises 235 residues: Adenosine 5'-phosphosulfate reductase (235 aa).

The [4Fe-4S] cluster site is built by C121, C122, C204, and C207. Catalysis depends on C230, which acts as the Nucleophile; cysteine thiosulfonate intermediate.

It belongs to the PAPS reductase family. CysH subfamily. It depends on [4Fe-4S] cluster as a cofactor.

It is found in the cytoplasm. The enzyme catalyses [thioredoxin]-disulfide + sulfite + AMP + 2 H(+) = adenosine 5'-phosphosulfate + [thioredoxin]-dithiol. Its pathway is sulfur metabolism; hydrogen sulfide biosynthesis; sulfite from sulfate. Its function is as follows. Catalyzes the formation of sulfite from adenosine 5'-phosphosulfate (APS) using thioredoxin as an electron donor. The polypeptide is Adenosine 5'-phosphosulfate reductase (Geobacillus thermodenitrificans (strain NG80-2)).